A 147-amino-acid polypeptide reads, in one-letter code: Putative pre-16S rRNA nuclease (147 aa).

It belongs to the YqgF nuclease family.

It localises to the cytoplasm. Could be a nuclease involved in processing of the 5'-end of pre-16S rRNA. This Limosilactobacillus reuteri (strain DSM 20016) (Lactobacillus reuteri) protein is Putative pre-16S rRNA nuclease.